Here is a 276-residue protein sequence, read N- to C-terminus: 4-deoxy-L-threo-5-hexosulose-uronate ketol-isomerase (276 aa).

Residues His-194, His-196, Glu-201, and His-243 each coordinate Zn(2+).

This sequence belongs to the KduI family. Zn(2+) serves as cofactor.

It carries out the reaction 5-dehydro-4-deoxy-D-glucuronate = 3-deoxy-D-glycero-2,5-hexodiulosonate. It participates in glycan metabolism; pectin degradation; 2-dehydro-3-deoxy-D-gluconate from pectin: step 4/5. Catalyzes the isomerization of 5-dehydro-4-deoxy-D-glucuronate to 3-deoxy-D-glycero-2,5-hexodiulosonate. This is 4-deoxy-L-threo-5-hexosulose-uronate ketol-isomerase from Caldicellulosiruptor bescii (strain ATCC BAA-1888 / DSM 6725 / KCTC 15123 / Z-1320) (Anaerocellum thermophilum).